The sequence spans 1788 residues: Laminin subunit beta-1 (1788 aa).

The signal sequence occupies residues 1 to 24 (MLELRLIVVIVLALLSWQWDPVDS). The segment at 23–43 (DSQRPPQHGRRDRPKYPPNKF) is disordered. A Laminin N-terminal domain is found at 50-287 (ERSSCYPATG…GISNMVVRGS (238 aa)). Residues Asn-138, Asn-201, and Asn-232 are each glycosylated (N-linked (GlcNAc...) asparagine). 19 disulfides stabilise this stretch: Cys-288/Cys-297, Cys-290/Cys-318, Cys-320/Cys-329, Cys-332/Cys-352, Cys-355/Cys-364, Cys-357/Cys-382, Cys-385/Cys-394, Cys-397/Cys-415, Cys-418/Cys-431, Cys-420/Cys-446, Cys-448/Cys-457, Cys-460/Cys-475, Cys-478/Cys-491, Cys-480/Cys-498, Cys-500/Cys-509, Cys-512/Cys-526, Cys-529/Cys-541, Cys-531/Cys-548, and Cys-550/Cys-559. Laminin EGF-like domains follow at residues 288–354 (CSCY…ACKK), 355–417 (CECN…VCQP), 418–477 (CDCD…GCEP), and 478–528 (CTCN…GCSL). Residue Asn-487 is glycosylated (N-linked (GlcNAc...) asparagine). Residues 529–559 (CNCDAGGSYDNYCDVISGQCRCRPHMTGRSC) form the Laminin EGF-like 5; truncated domain. The 217-residue stretch at 567–783 (FIPLLPEVHE…LDNILSVFVH (217 aa)) folds into the Laminin IV type B domain. Asn-591 carries an N-linked (GlcNAc...) asparagine glycan. The Cell attachment site motif lies at 641–643 (RGD). Disulfide bonds link Cys-789–Cys-801, Cys-791–Cys-808, Cys-810–Cys-819, Cys-822–Cys-834, Cys-837–Cys-849, Cys-839–Cys-856, Cys-858–Cys-867, Cys-870–Cys-880, Cys-883–Cys-892, Cys-885–Cys-899, Cys-902–Cys-911, Cys-914–Cys-930, Cys-933–Cys-949, Cys-935–Cys-960, Cys-962–Cys-971, Cys-974–Cys-988, Cys-991–Cys-1005, Cys-993–Cys-1012, Cys-1015–Cys-1024, Cys-1027–Cys-1040, Cys-1043–Cys-1057, Cys-1045–Cys-1064, Cys-1066–Cys-1075, Cys-1078–Cys-1091, Cys-1094–Cys-1106, Cys-1096–Cys-1113, Cys-1115–Cys-1124, Cys-1127–Cys-1139, Cys-1142–Cys-1154, Cys-1144–Cys-1161, Cys-1163–Cys-1172, and Cys-1175–Cys-1186. Laminin EGF-like domains are found at residues 789-836 (CNCN…GCKA), 837-882 (CDCN…ECRV), 883-932 (CQCN…GCRP), 933-990 (CRCP…TCSK), 991-1042 (CECS…NCQQ), 1043-1093 (CECD…GCES), 1094-1141 (CNCD…KCQP), and 1142-1188 (CECD…HCSP). N-linked (GlcNAc...) asparagine glycosylation is present at Asn-1051. Residues 1189-1405 (CGECFNNWDL…SQIPELNNQV (217 aa)) form a domain II region. N-linked (GlcNAc...) asparagine glycans are attached at residues Asn-1246, Asn-1301, Asn-1330, and Asn-1341. Positions 1255 to 1405 (EKLDYETQSL…SQIPELNNQV (151 aa)) form a coiled coil. The tract at residues 1406–1432 (CGKPGDPCDSLCGGAGCGHCGGFLSCE) is domain alpha. A domain I region spans residues 1433–1788 (HGAKTHSEEA…RGSHYRQCYT (356 aa)). Residues 1453 to 1505 (ITSKKDQADQTIRALTQAKLNASEAYEKAKRGFEQSERYLNQTNANIKLAENL) adopt a coiled-coil conformation. N-linked (GlcNAc...) asparagine glycosylation is found at Asn-1473, Asn-1493, and Asn-1515. The stretch at 1540-1561 (EEIETLGDQINRAVSSLKNVEA) forms a coiled coil. Asn-1581, Asn-1644, and Asn-1703 each carry an N-linked (GlcNAc...) asparagine glycan. Residues 1608–1762 (QGKAKDAIQQ…QQLLRLQAEI (155 aa)) adopt a coiled-coil conformation. The tract at residues 1690-1719 (GEANNLQSATSATNQTLTDRASRSENARER) is disordered. Residues 1693 to 1708 (NNLQSATSATNQTLTD) are compositionally biased toward polar residues. Basic and acidic residues predominate over residues 1709 to 1719 (RASRSENARER).

In terms of assembly, laminin is a complex glycoprotein, consisting of three different polypeptide chains (alpha, beta, gamma), which are bound to each other by disulfide bonds into a cross-shaped molecule comprising one long and three short arms with globules at each end. Found in the basement membranes (major component).

It is found in the secreted. The protein localises to the extracellular space. Its subcellular location is the extracellular matrix. It localises to the basement membrane. In terms of biological role, binding to cells via a high affinity receptor, laminin is thought to mediate the attachment, migration and organization of cells into tissues during embryonic development by interacting with other extracellular matrix components. Required for Ndg localization to the basement membrane. The sequence is that of Laminin subunit beta-1 (LanB1) from Drosophila melanogaster (Fruit fly).